Consider the following 187-residue polypeptide: UPF0301 protein VV2869 (187 aa).

Belongs to the UPF0301 (AlgH) family.

This is UPF0301 protein VV2869 from Vibrio vulnificus (strain YJ016).